The sequence spans 299 residues: Taste receptor type 2 member 4 (299 aa).

Over 1-9 (MLWLFYSSA) the chain is Extracellular. Residues 10–30 (IIASVILDFVGIIMSLFITVV) traverse the membrane as a helical segment. Residues 31-46 (NYKTWVKSHRISSSER) lie on the Cytoplasmic side of the membrane. The helical transmembrane segment at 47 to 67 (ILFSLGITRFFMLALFLVNTI) threads the bilayer. The Extracellular segment spans residues 68–81 (YFVSSNKERSVYLS). The chain crosses the membrane as a helical span at residues 82-102 (AFFVLCFMFLDSSSLWFVTLL). The Cytoplasmic segment spans residues 103 to 131 (NSLYCVKITNFQHSVFLLLKRNISPKIPR). Residues 132 to 152 (LLPACVLISAFTTCLYITLSQ) traverse the membrane as a helical segment. Residues 153 to 172 (ASPFPELVTKRNNTSFNISE) are Extracellular-facing. N-linked (GlcNAc...) asparagine glycans are attached at residues Asn-164, Asn-165, and Asn-169. Residues 173 to 193 (GILSLVVSFVLSSSLQFIINV) traverse the membrane as a helical segment. Over 194–230 (TSASLLIYSLRRHIRKMQKNATGFWNPQTEAHVGAMK) the chain is Cytoplasmic. The chain crosses the membrane as a helical span at residues 231-251 (LMIYFLILYIPYSVATLVQYL). The Extracellular portion of the chain corresponds to 252–262 (PFYAGMDMGTK). The helical transmembrane segment at 263–283 (SICLIFATLYSPGHSVLIIIT) threads the bilayer. The Cytoplasmic portion of the chain corresponds to 284-299 (HPKLKTTAKKILCFKK).

This sequence belongs to the G-protein coupled receptor T2R family.

It localises to the membrane. The protein localises to the cell projection. The protein resides in the cilium membrane. Its function is as follows. Gustducin-coupled receptor implicated in the perception of bitter compounds in the oral cavity and the gastrointestinal tract. Signals through PLCB2 and the calcium-regulated cation channel TRPM5. In airway epithelial cells, binding of denatonium increases the intracellular calcium ion concentration and stimulates ciliary beat frequency. The sequence is that of Taste receptor type 2 member 4 (TAS2R4) from Papio hamadryas (Hamadryas baboon).